We begin with the raw amino-acid sequence, 161 residues long: Cytochrome c-type biogenesis protein CcmE (161 aa).

Residues 1 to 8 (MNPRRKKR) are Cytoplasmic-facing. A helical; Signal-anchor for type II membrane protein transmembrane segment spans residues 9 to 29 (LGLILALFVGISATVGLMLYA). The Periplasmic portion of the chain corresponds to 30 to 161 (LNQNMDLFYT…TEQQKQGTGQ (132 aa)). Heme contacts are provided by His129 and Tyr133. Residues 142-161 (MKKTHEPLQYTEQQKQGTGQ) are disordered. Positions 151–161 (YTEQQKQGTGQ) are enriched in polar residues.

Belongs to the CcmE/CycJ family.

The protein localises to the cell inner membrane. Its function is as follows. Heme chaperone required for the biogenesis of c-type cytochromes. Transiently binds heme delivered by CcmC and transfers the heme to apo-cytochromes in a process facilitated by CcmF and CcmH. This is Cytochrome c-type biogenesis protein CcmE from Aliivibrio fischeri (strain MJ11) (Vibrio fischeri).